Reading from the N-terminus, the 579-residue chain is Type IV pilus assembly ATPase PilB (579 aa).

Residue 340 to 345 (GSGKTV) coordinates ATP. 4 residues coordinate Zn(2+): cysteine 470, cysteine 473, cysteine 507, and cysteine 510.

Belongs to the GSP E family. In terms of assembly, interacts with CpiA.

It localises to the cytoplasm. Inhibited by the inhibitory protein CpiA. Functionally, ATPase component of the type IV pilus (T4P). Acts as a molecular motor to provide the energy that is required for biogenesis of the pilus and the extrusion of substrates generated in the cytoplasm. PilB is required for optimal T4P extension and, consequently, efficient natural transformation. May promote processive T4P extension. The chain is Type IV pilus assembly ATPase PilB from Acinetobacter baylyi (strain ATCC 33305 / BD413 / ADP1).